The sequence spans 399 residues: Methylthioribose kinase (399 aa).

ATP contacts are provided by residues Asn-40, Lys-57, and 111–113; that span reads EDL. Asp-229 contacts substrate. An ATP-binding site is contributed by 246-248; the sequence is DAE. Arg-344 is a substrate binding site.

It belongs to the methylthioribose kinase family. As to quaternary structure, homodimer.

It carries out the reaction 5-(methylsulfanyl)-D-ribose + ATP = 5-(methylsulfanyl)-alpha-D-ribose 1-phosphate + ADP + H(+). It participates in amino-acid biosynthesis; L-methionine biosynthesis via salvage pathway; S-methyl-5-thio-alpha-D-ribose 1-phosphate from S-methyl-5'-thioadenosine (hydrolase route): step 2/2. In terms of biological role, catalyzes the phosphorylation of methylthioribose into methylthioribose-1-phosphate. The sequence is that of Methylthioribose kinase from Citrobacter koseri (strain ATCC BAA-895 / CDC 4225-83 / SGSC4696).